The primary structure comprises 221 residues: FMN-dependent NADH:quinone oxidoreductase 1 (221 aa).

Residues 17-19 (SAS) and 148-151 (SSGG) each bind FMN.

It belongs to the azoreductase type 1 family. As to quaternary structure, homodimer. Requires FMN as cofactor.

The catalysed reaction is 2 a quinone + NADH + H(+) = 2 a 1,4-benzosemiquinone + NAD(+). It catalyses the reaction N,N-dimethyl-1,4-phenylenediamine + anthranilate + 2 NAD(+) = 2-(4-dimethylaminophenyl)diazenylbenzoate + 2 NADH + 2 H(+). In terms of biological role, quinone reductase that provides resistance to thiol-specific stress caused by electrophilic quinones. Also exhibits azoreductase activity. Catalyzes the reductive cleavage of the azo bond in aromatic azo compounds to the corresponding amines. This chain is FMN-dependent NADH:quinone oxidoreductase 1, found in Clostridium acetobutylicum (strain ATCC 824 / DSM 792 / JCM 1419 / IAM 19013 / LMG 5710 / NBRC 13948 / NRRL B-527 / VKM B-1787 / 2291 / W).